Reading from the N-terminus, the 263-residue chain is Tryptophan synthase alpha chain (263 aa).

Active-site proton acceptor residues include glutamate 47 and aspartate 58.

Belongs to the TrpA family. Tetramer of two alpha and two beta chains.

The protein resides in the plastid. It is found in the chloroplast. The catalysed reaction is (1S,2R)-1-C-(indol-3-yl)glycerol 3-phosphate + L-serine = D-glyceraldehyde 3-phosphate + L-tryptophan + H2O. Its pathway is amino-acid biosynthesis; L-tryptophan biosynthesis; L-tryptophan from chorismate: step 5/5. Functionally, the alpha subunit is responsible for the aldol cleavage of indoleglycerol phosphate to indole and glyceraldehyde 3-phosphate. The chain is Tryptophan synthase alpha chain from Antithamnion sp. (Red alga).